A 687-amino-acid chain; its full sequence is Adhesion G-protein coupled receptor G1 (687 aa).

Residues 1 to 25 (MTAQSLLQMTLFLLSLLFLVQGAHG) form the signal peptide. 26–33 (RGHREDFR) lines the heparin pocket. At 26–402 (RGHREDFRFC…VEVDAVHKHY (377 aa)) the chain is on the extracellular side. Disulfide bonds link cysteine 35–cysteine 91 and cysteine 121–cysteine 177. Asparagine 39, asparagine 148, and asparagine 171 each carry an N-linked (GlcNAc...) asparagine glycan. 190–200 (LKHPQKASRRP) serves as a coordination point for heparin. The region spanning 224-395 (DTVSFEEDRI…AVLMVSSVEV (172 aa)) is the GAIN-B domain. 4 N-linked (GlcNAc...) asparagine glycosylation sites follow: asparagine 234, asparagine 303, asparagine 324, and asparagine 341. 2 cysteine pairs are disulfide-bonded: cysteine 346–cysteine 377 and cysteine 366–cysteine 379. The GPS stretch occupies residues 346–395 (CVFWVEDPTLSSPGHWSSAGCETVRRETQTSCFCNHLTYFAVLMVSSVEV). The segment at 384–397 (YFAVLMVSSVEVDA) is stachel. Residues 403-423 (LSLLSYVGCVISALACVVTIA) form a helical membrane-spanning segment. The Cytoplasmic segment spans residues 424–442 (AYLCSRRKPRDYTIKVHMN). The helical transmembrane segment at 443-463 (LLLAVFLLDMSFLLSEPVALT) threads the bilayer. At 464-470 (GSEAGCR) the chain is on the extracellular side. The helical transmembrane segment at 471-491 (AGAIFLHFSLLACLSWMGLEG) threads the bilayer. Over 492 to 512 (YNLYRLVVEVFGTYVPGYLLK) the chain is Cytoplasmic. Residues 513–533 (LSAMGWGFPIFLVTLVALVDV) form a helical membrane-spanning segment. Over 534–570 (DNYGPIILAVHRTPESVIYPSMCWIRDSLVSYVTNLG) the chain is Extracellular. A helical membrane pass occupies residues 571–591 (LFSLVFLFNMAMLGTMVVQIL). The Cytoplasmic portion of the chain corresponds to 592-603 (RLRPHTQKWSHV). The helical transmembrane segment at 604–624 (LTLLGLSLVLGLPWALIFFSF) threads the bilayer. Residues 625–630 (ASGTFQ) are Extracellular-facing. A helical membrane pass occupies residues 631-651 (LVVLYLFSIITSFQGFLIFIW). Over 652–687 (YWSMRLQARGGPSPLKSNSDSARLPISSGSTSSSRI) the chain is Cytoplasmic. The tract at residues 664–687 (SPLKSNSDSARLPISSGSTSSSRI) is disordered. The span at 678-687 (SSGSTSSSRI) shows a compositional bias: low complexity.

This sequence belongs to the G-protein coupled receptor 2 family. LN-TM7 subfamily. Heterodimer of 2 chains generated by proteolytic processing; the large extracellular N-terminal fragment (ADGRG1 NT) and the membrane-bound C-terminal fragment (ADGRG1-CT) predominantly remain associated and non-covalently linked. ADGRG1 NT self-associates in a trans-trans manner; the homophilic interaction enhances receptor signaling. Interacts with TGM2. Interacts with heparin; leading to the reduction of ADGRG1 shedding. Interacts with COL3A1. Part of a GPCR-tetraspanin complex at least consisting of ADGRG1, CD81, eventually CD9, and GNA11 in which CD81 is enhancing the association of ADGRG1 with GNA11. Post-translationally, autoproteolytically cleaved into 2 fragments; the large extracellular N-terminal fragment (ADGRG1 NT) and the membrane-bound C-terminal fragment (ADGRG1 CT) predominantly remain associated and non-covalently linked. Shedding to yield the secreted ADGRG1 N-terminal fragment seems to involve metalloprotease(s). Ubiquitinated. Undergoes polyubiquitination upon activation.

It localises to the cell membrane. Its subcellular location is the secreted. It is found in the membrane raft. With respect to regulation, forms a heterodimer of 2 chains generated by proteolytic processing that remain associated through non-covalent interactions mediated by the GAIN-B domain. In the inactivated receptor, the Stachel sequence (also named stalk) is embedded in the GAIN-B domain, where it adopts a beta-strand conformation. On activation, the Stachel moves into the 7 transmembrane region and adopts a twisted hook-shaped configuration that forms contacts within the receptor, leading to coupling of a G-alpha protein, which activates signaling. The cleaved GAIN-B and N-terminal domains can then dissociate from the rest of the receptor. Functionally, adhesion G-protein coupled receptor (aGPCR) for steroid hormone 17alpha-hydroxypregnenolone (17-OH), which is involved in cell adhesion and cell-cell interactions. Ligand binding causes a conformation change that triggers signaling via guanine nucleotide-binding proteins (G proteins) and modulates the activity of downstream effectors, such as RhoA pathway. ADGRG1 is coupled to G(12) and/or G(13) G proteins (GNA12 and GNA13, respectively) and mediates the activation Rho small GTPases. Acts as a potent suppressor of ferroptosis: binding to 17-OH-binding initiates signaling that down-regulates CD36 and alleviates ferroptosis-induced liver injury. Ligand-binding also induces cell adhesion activity via association with proteins such as collagen III/COL3A1 and TGM2. Mediates cell matrix adhesion in developing neurons and hematopoietic stem cells. Involved in cortical development, specifically in maintenance of the pial basement membrane integrity and in cortical lamination: association with COL3A1 in the developing brain inhibits neuronal migration via activation of the RhoA pathway. Together with TGM2, acts as a regulator of myelination and myelin repair in oligodendrocyte precursor cells. Acts as a hemostatic sensor of shear force: G protein-coupled receptor signaling is activated in response to shear force in platelets, promoting G(13) G protein signaling, and platelet shape change and aggregation in a COL3A1-dependent manner. Acts as an inhibitor of VEGFA production thereby inhibiting angiogenesis through a signaling pathway mediated by PRKCA. Plays a role in the maintenance of hematopoietic stem cells in bone marrow niche. Plays an essential role in testis development. This chain is Adhesion G-protein coupled receptor G1 (ADGRG1), found in Pongo pygmaeus (Bornean orangutan).